The sequence spans 217 residues: Oxygen regulatory protein NreC (217 aa).

One can recognise a Response regulatory domain in the interval 2-119; the sequence is KIVIADDHAV…QLLLAIRTVY (118 aa). Asp-53 bears the 4-aspartylphosphate mark. An HTH luxR-type domain is found at 148-213; sequence TTDPFKILSK…ELVEYALKKK (66 aa). Positions 172–191 form a DNA-binding region, H-T-H motif; that stretch reads NKEIAEKLFVSVKTVEAHKT.

In terms of processing, phosphorylated by NreB.

It is found in the cytoplasm. In terms of biological role, member of the two-component regulatory system NreB/NreC involved in the control of dissimilatory nitrate/nitrite reduction in response to oxygen. Phosphorylated NreC binds to a GC-rich palindromic sequence at the promoters of the nitrate (narGHJI) and nitrite (nir) reductase operons, as well as the putative nitrate transporter gene narT, and activates their expression. In Staphylococcus aureus (strain USA300 / TCH1516), this protein is Oxygen regulatory protein NreC (nreC).